We begin with the raw amino-acid sequence, 368 residues long: snRNA-activating protein complex subunit 1 (368 aa).

Positions 1-168 (MGTPPGLQTD…EEFKDPSDRV (168 aa)) are SNAPC3-binding. Residues 164 to 268 (PSDRVMKLIT…AESLAKIKSK (105 aa)) form an SNAPC4-binding region. Disordered stretches follow at residues 224–257 (QQWH…ERCE) and 275–368 (QASK…RRKH). Over residues 238-257 (KTNDGEEKMEGNSQETERCE) the composition is skewed to basic and acidic residues. 2 positions are modified to phosphoserine: Ser289 and Ser290.

Part of the SNAPc complex composed of 5 subunits: SNAPC1, SNAPC2, SNAPC3, SNAPC4 and SNAPC5. SNAPC1 interacts with SNAPC3, SNAPC4 and TBP.

Its subcellular location is the nucleus. In terms of biological role, part of the SNAPc complex required for the transcription of both RNA polymerase II and III small-nuclear RNA genes. Binds to the proximal sequence element (PSE), a non-TATA-box basal promoter element common to these 2 types of genes. Recruits TBP and BRF2 to the U6 snRNA TATA box. The sequence is that of snRNA-activating protein complex subunit 1 (SNAPC1) from Homo sapiens (Human).